Here is a 382-residue protein sequence, read N- to C-terminus: Chaperone protein DnaJ (382 aa).

The region spanning 5–69 (DLYGVLGVAK…QKRANYDQSG (65 aa)) is the J domain. The disordered stretch occupies residues 104-123 (QFFGGGGGQRNPNAPRPGRD). A CR-type zinc finger spans residues 138 to 220 (GKKTKIKYNR…CGGSGHEEER (83 aa)). Zn(2+)-binding residues include C151, C154, C168, C171, C194, C197, C208, and C211. CXXCXGXG motif repeat units lie at residues 151–158 (CHTCGGNG), 168–175 (CHQCGGSG), 194–201 (CPVCHGTG), and 208–215 (CPTCGGSG). Residues 358–382 (ASGESVTGSGKGNLFNKMRDKFNEN) form a disordered region.

The protein belongs to the DnaJ family. As to quaternary structure, homodimer. Zn(2+) is required as a cofactor.

The protein localises to the cytoplasm. Functionally, participates actively in the response to hyperosmotic and heat shock by preventing the aggregation of stress-denatured proteins and by disaggregating proteins, also in an autonomous, DnaK-independent fashion. Unfolded proteins bind initially to DnaJ; upon interaction with the DnaJ-bound protein, DnaK hydrolyzes its bound ATP, resulting in the formation of a stable complex. GrpE releases ADP from DnaK; ATP binding to DnaK triggers the release of the substrate protein, thus completing the reaction cycle. Several rounds of ATP-dependent interactions between DnaJ, DnaK and GrpE are required for fully efficient folding. Also involved, together with DnaK and GrpE, in the DNA replication of plasmids through activation of initiation proteins. This Levilactobacillus brevis (strain ATCC 367 / BCRC 12310 / CIP 105137 / JCM 1170 / LMG 11437 / NCIMB 947 / NCTC 947) (Lactobacillus brevis) protein is Chaperone protein DnaJ.